The primary structure comprises 102 residues: Protein YcgL (102 aa).

One can recognise a YcgL domain in the interval Met14–Leu98.

The chain is Protein YcgL from Salmonella agona (strain SL483).